Here is a 529-residue protein sequence, read N- to C-terminus: Peptide chain release factor 3 (529 aa).

The tr-type G domain maps to 11–280 (AKRRTFAIIS…GLVEWAPAPM (270 aa)). GTP is bound by residues 20–27 (SHPDAGKT), 88–92 (DTPGH), and 142–145 (NKLD).

This sequence belongs to the TRAFAC class translation factor GTPase superfamily. Classic translation factor GTPase family. PrfC subfamily.

The protein resides in the cytoplasm. Functionally, increases the formation of ribosomal termination complexes and stimulates activities of RF-1 and RF-2. It binds guanine nucleotides and has strong preference for UGA stop codons. It may interact directly with the ribosome. The stimulation of RF-1 and RF-2 is significantly reduced by GTP and GDP, but not by GMP. In Yersinia pseudotuberculosis serotype O:1b (strain IP 31758), this protein is Peptide chain release factor 3.